Reading from the N-terminus, the 233-residue chain is Aspartate/glutamate leucyltransferase (233 aa).

It belongs to the R-transferase family. Bpt subfamily.

The protein localises to the cytoplasm. It carries out the reaction N-terminal L-glutamyl-[protein] + L-leucyl-tRNA(Leu) = N-terminal L-leucyl-L-glutamyl-[protein] + tRNA(Leu) + H(+). The catalysed reaction is N-terminal L-aspartyl-[protein] + L-leucyl-tRNA(Leu) = N-terminal L-leucyl-L-aspartyl-[protein] + tRNA(Leu) + H(+). In terms of biological role, functions in the N-end rule pathway of protein degradation where it conjugates Leu from its aminoacyl-tRNA to the N-termini of proteins containing an N-terminal aspartate or glutamate. In Vibrio cholerae serotype O1 (strain ATCC 39315 / El Tor Inaba N16961), this protein is Aspartate/glutamate leucyltransferase.